A 335-amino-acid polypeptide reads, in one-letter code: N-acetyl-gamma-glutamyl-phosphate reductase (335 aa).

Cys147 is a catalytic residue.

This sequence belongs to the NAGSA dehydrogenase family. Type 1 subfamily.

It is found in the cytoplasm. The enzyme catalyses N-acetyl-L-glutamate 5-semialdehyde + phosphate + NADP(+) = N-acetyl-L-glutamyl 5-phosphate + NADPH + H(+). It functions in the pathway amino-acid biosynthesis; L-arginine biosynthesis; N(2)-acetyl-L-ornithine from L-glutamate: step 3/4. Its function is as follows. Catalyzes the NADPH-dependent reduction of N-acetyl-5-glutamyl phosphate to yield N-acetyl-L-glutamate 5-semialdehyde. The protein is N-acetyl-gamma-glutamyl-phosphate reductase of Sulfurovum sp. (strain NBC37-1).